The following is a 1212-amino-acid chain: DNA-directed RNA polymerase subunit beta' (1212 aa).

C60, C62, C75, and C78 together coordinate Zn(2+). D450, D452, and D454 together coordinate Mg(2+). Zn(2+) is bound by residues C819, C893, C900, and C903.

The protein belongs to the RNA polymerase beta' chain family. In terms of assembly, the RNAP catalytic core consists of 2 alpha, 1 beta, 1 beta' and 1 omega subunit. When a sigma factor is associated with the core the holoenzyme is formed, which can initiate transcription. Requires Mg(2+) as cofactor. The cofactor is Zn(2+).

The enzyme catalyses RNA(n) + a ribonucleoside 5'-triphosphate = RNA(n+1) + diphosphate. Its function is as follows. DNA-dependent RNA polymerase catalyzes the transcription of DNA into RNA using the four ribonucleoside triphosphates as substrates. The polypeptide is DNA-directed RNA polymerase subunit beta' (Streptococcus uberis (strain ATCC BAA-854 / 0140J)).